The sequence spans 406 residues: Glutamyl-tRNA reductase (406 aa).

Substrate-binding positions include Thr-49–Arg-52, Ser-107, Glu-112–Gln-114, and Gln-118. Cys-50 serves as the catalytic Nucleophile. Residue Gly-187–Gly-192 coordinates NADP(+).

Belongs to the glutamyl-tRNA reductase family. As to quaternary structure, homodimer.

It catalyses the reaction (S)-4-amino-5-oxopentanoate + tRNA(Glu) + NADP(+) = L-glutamyl-tRNA(Glu) + NADPH + H(+). The protein operates within porphyrin-containing compound metabolism; protoporphyrin-IX biosynthesis; 5-aminolevulinate from L-glutamyl-tRNA(Glu): step 1/2. Its function is as follows. Catalyzes the NADPH-dependent reduction of glutamyl-tRNA(Glu) to glutamate 1-semialdehyde (GSA). This chain is Glutamyl-tRNA reductase, found in Thermomicrobium roseum (strain ATCC 27502 / DSM 5159 / P-2).